The primary structure comprises 535 residues: CTP synthase (535 aa).

The segment at 1 to 267 is amidoligase domain; the sequence is MTKFIFVTGG…DDIVIKKLGL (267 aa). S13 provides a ligand contact to CTP. Residue S13 coordinates UTP. 14–19 serves as a coordination point for ATP; it reads SLGKGI. L-glutamine is bound at residue Y54. D71 contributes to the ATP binding site. Mg(2+) is bound by residues D71 and E141. CTP contacts are provided by residues 148-150, 188-193, and K224; these read DIE and KTKPTQ. UTP contacts are provided by residues 188-193 and K224; that span reads KTKPTQ. Residues 292–534 form the Glutamine amidotransferase type-1 domain; it reads TIGIVGKYVS…IGASLKTNKL (243 aa). G354 is an L-glutamine binding site. C381 serves as the catalytic Nucleophile; for glutamine hydrolysis. Residues 382-385, E405, and R462 contribute to the L-glutamine site; that span reads LGMQ. Residues H507 and E509 contribute to the active site.

This sequence belongs to the CTP synthase family. As to quaternary structure, homotetramer.

It catalyses the reaction UTP + L-glutamine + ATP + H2O = CTP + L-glutamate + ADP + phosphate + 2 H(+). The catalysed reaction is L-glutamine + H2O = L-glutamate + NH4(+). The enzyme catalyses UTP + NH4(+) + ATP = CTP + ADP + phosphate + 2 H(+). It participates in pyrimidine metabolism; CTP biosynthesis via de novo pathway; CTP from UDP: step 2/2. Allosterically activated by GTP, when glutamine is the substrate; GTP has no effect on the reaction when ammonia is the substrate. The allosteric effector GTP functions by stabilizing the protein conformation that binds the tetrahedral intermediate(s) formed during glutamine hydrolysis. Inhibited by the product CTP, via allosteric rather than competitive inhibition. In terms of biological role, catalyzes the ATP-dependent amination of UTP to CTP with either L-glutamine or ammonia as the source of nitrogen. Regulates intracellular CTP levels through interactions with the four ribonucleotide triphosphates. This is CTP synthase from Carboxydothermus hydrogenoformans (strain ATCC BAA-161 / DSM 6008 / Z-2901).